A 1130-amino-acid chain; its full sequence is Sterol regulatory element-binding protein 2 (1130 aa).

Residues 1–50 are transcriptional activation (acidic); sequence MDESSELGVLETMETLTELGDELTLGDIDEMLQFVSNQVGEFPDLFSEQL. Residues 1–470 lie on the Cytoplasmic side of the membrane; it reads MDESSELGVL…VALGMVDRSR (470 aa). The tract at residues 53–133 is disordered; sequence SFPGGGSNGG…PQPQPQPPAQ (81 aa). Gly residues predominate over residues 55–64; that stretch reads PGGGSNGGSG. Over residues 83–93 the composition is skewed to polar residues; that stretch reads RSFSQVPLSTF. Residues 94–104 show a composition bias toward low complexity; the sequence is SPSAASPQAPA. The segment covering 111–131 has biased composition (pro residues); the sequence is PTPPRATPVLQPRPQPQPQPP. Residues 226-480 are interaction with LMNA; it reads QQVPVLVQPQ…ILLCVLTFLG (255 aa). The region spanning 319–369 is the bHLH domain; sequence ERRTTHNIIEKRYRSSINDKIIELKDLVMGTDAKMHKSGVLRKAIDYIKYL. The tract at residues 369–390 is leucine-zipper; the sequence is LQQVNHKLRQENMVLKLANQKN. Residue Lys453 forms a Glycyl lysine isopeptide (Lys-Gly) (interchain with G-Cter in SUMO2) linkage. Residues 471–491 traverse the membrane as a helical segment; the sequence is ILLCVLTFLGLSFNPLTSLLQ. Residues 492 to 522 are Lumenal-facing; it reads WGGAHNTDQHPYSGSGRSVLSLESGAGGWFD. Residues 523–543 form a helical membrane-spanning segment; the sequence is WMVPTLLLWLVNGVIVLSVFV. The Cytoplasmic portion of the chain corresponds to 544–1130; the sequence is KLLVHGEPVI…LGGGTAIAAS (587 aa). Ser1087 carries the post-translational modification Phosphoserine.

The protein belongs to the SREBP family. Forms a tight complex with SCAP, the SCAP-SREBP complex, in the endoplasmic reticulum membrane and the Golgi apparatus. Interacts with PAQR3; the interaction anchors the SCAP-SREBP complex to the Golgi apparatus in low cholesterol conditions. Interacts (via C-terminal domain) with RNF139. In terms of assembly, homodimer; efficient DNA binding of the soluble transcription factor fragment requires dimerization with another bHLH protein. Interacts with LMNA. Processed in the Golgi apparatus, releasing the protein from the membrane. At low cholesterol the SCAP-SREBP complex is recruited into COPII vesicles for export from the endoplasmic reticulum. In the Golgi, complex SREBPs are cleaved sequentially by site-1 (MBTPS1, S1P) and site-2 (MBTPS2, S2P) proteases. The first cleavage by site-1 protease occurs within the luminal loop, the second cleavage by site-2 protease occurs within the first transmembrane domain, releasing the transcription factor from the Golgi membrane. Apoptosis triggers cleavage by the cysteine proteases caspase-3 and caspase-7. Cleavage and activation is induced by mediated cholesterol efflux. In terms of processing, phosphorylated by AMPK, leading to suppress protein processing and nuclear translocation, and repress target gene expression. Post-translationally, SCAP-free SREBF2 is ubiquitinated by the BCR(ARMC5) complex, leading to its degradation. Ubiquitinated; the nuclear form has a rapid turnover and is rapidly ubiquitinated and degraded by the proteasome in the nucleus.

It is found in the endoplasmic reticulum membrane. The protein localises to the golgi apparatus membrane. Its subcellular location is the cytoplasmic vesicle. It localises to the COPII-coated vesicle membrane. The protein resides in the nucleus. With respect to regulation, activation by cleavage is down-regulated upon activation of SIRT3-dependent PRKAA1/AMPK-alpha signaling cascade which leads to inhibition of ATP-consuming lipogenesis to restore cellular energy balance. In terms of biological role, precursor of the transcription factor form (Processed sterol regulatory element-binding protein 2), which is embedded in the endoplasmic reticulum membrane. Low sterol concentrations promote processing of this form, releasing the transcription factor form that translocates into the nucleus and activates transcription of genes involved in cholesterol biosynthesis. Its function is as follows. Key transcription factor that regulates expression of genes involved in cholesterol biosynthesis. Binds to the sterol regulatory element 1 (SRE-1) (5'-ATCACCCCAC-3'). Has dual sequence specificity binding to both an E-box motif (5'-ATCACGTGA-3') and to SRE-1 (5'-ATCACCCCAC-3'). Regulates transcription of genes related to cholesterol synthesis pathway. This is Sterol regulatory element-binding protein 2 from Mus musculus (Mouse).